A 75-amino-acid polypeptide reads, in one-letter code: ATP synthase subunit c (75 aa).

A run of 2 helical transmembrane segments spans residues Gly-4–Gln-24 and Ala-54–Phe-74.

Belongs to the ATPase C chain family. As to quaternary structure, F-type ATPases have 2 components, F(1) - the catalytic core - and F(0) - the membrane proton channel. F(1) has five subunits: alpha(3), beta(3), gamma(1), delta(1), epsilon(1). F(0) has three main subunits: a(1), b(2) and c(10-14). The alpha and beta chains form an alternating ring which encloses part of the gamma chain. F(1) is attached to F(0) by a central stalk formed by the gamma and epsilon chains, while a peripheral stalk is formed by the delta and b chains.

Its subcellular location is the cell membrane. In terms of biological role, f(1)F(0) ATP synthase produces ATP from ADP in the presence of a proton or sodium gradient. F-type ATPases consist of two structural domains, F(1) containing the extramembraneous catalytic core and F(0) containing the membrane proton channel, linked together by a central stalk and a peripheral stalk. During catalysis, ATP synthesis in the catalytic domain of F(1) is coupled via a rotary mechanism of the central stalk subunits to proton translocation. Its function is as follows. Key component of the F(0) channel; it plays a direct role in translocation across the membrane. A homomeric c-ring of between 10-14 subunits forms the central stalk rotor element with the F(1) delta and epsilon subunits. The protein is ATP synthase subunit c of Mycoplasmopsis agalactiae (strain NCTC 10123 / CIP 59.7 / PG2) (Mycoplasma agalactiae).